Reading from the N-terminus, the 2153-residue chain is Genome polyprotein (2153 aa).

A lipid anchor (N-myristoyl glycine; by host) is attached at glycine 2. The Cytoplasmic segment spans residues 2–1466 (GAQVSRQNVG…DLNIANSIIT (1465 aa)). An amphipathic alpha-helix region spans residues 565 to 582 (PITQNPVERYVDEVLNEV). Residues histidine 871 and aspartate 888 each act as for protease 2A activity in the active site. Cysteine 905 and cysteine 907 together coordinate Zn(2+). The active-site For protease 2A activity is the cysteine 959. Residues cysteine 965 and histidine 967 each contribute to the Zn(2+) site. Residues 1091–1160 (SDSWLKKFTE…NLRAADTNTQ (70 aa)) form a membrane-binding region. The oligomerization stretch occupies residues 1091–1224 (SDSWLKKFTE…PPGTGKSITT (134 aa)). The segment at 1112–1116 (GNKIS) is RNA-binding. The SF3 helicase domain maps to 1186-1346 (KRIKVLYHKC…YKDNQGKLDV (161 aa)). Cysteine 1353, cysteine 1364, and cysteine 1369 together coordinate Zn(2+). The C4-type; degenerate zinc finger occupies 1353-1369 (CDVDSKIGNAKCCPFVC). The RNA-binding stretch occupies residues 1396-1403 (EDKRRRQV). The oligomerization stretch occupies residues 1407–1412 (MSAIFQ). The stretch at 1467 to 1482 (IIANIISIAGIIYIIY) is an intramembrane region. Residues 1483 to 2153 (KLFCSLQGPY…LLRHEWYEKF (671 aa)) lie on the Cytoplasmic side of the membrane. Tyrosine 1492 is modified (O-(5'-phospho-RNA)-tyrosine). The Peptidase C3 domain maps to 1511–1689 (GPEEEFGMSI…FSSMLLRSYF (179 aa)). Active-site for protease 3C activity residues include histidine 1550, glutamate 1581, and cysteine 1657. The RdRp catalytic domain maps to 1921-2034 (DCIMAFDYTN…SYKYKLDMEA (114 aa)). Positions 1927 and 2020 each coordinate Mg(2+).

The protein belongs to the picornaviruses polyprotein family. As to quaternary structure, interacts with capsid protein VP1 and capsid protein VP3 to form heterotrimeric protomers. Interacts with capsid protein VP0, and capsid protein VP3 to form heterotrimeric protomers. Five protomers subsequently associate to form pentamers which serve as building blocks for the capsid. Interacts with capsid protein VP2, capsid protein VP3 and capsid protein VP4 following cleavage of capsid protein VP0. In terms of assembly, interacts with capsid protein VP1 and capsid protein VP3 in the mature capsid. As to quaternary structure, interacts with capsid protein VP0 and capsid protein VP1 to form heterotrimeric protomers. Five protomers subsequently associate to form pentamers which serve as building blocks for the capsid. Interacts with capsid protein VP4 in the mature capsid. Interacts with protein 2C; this interaction may be important for virion morphogenesis. Interacts with capsid protein VP1 and capsid protein VP3. In terms of assembly, homodimer. As to quaternary structure, homohexamer; forms a hexameric ring structure with 6-fold symmetry characteristic of AAA+ ATPases. Interacts (via N-terminus) with host RTN3 (via reticulon domain); this interaction is important for viral replication. Interacts with capsid protein VP3; this interaction may be important for virion morphogenesis. Interacts with protein 3CD. In terms of assembly, homodimer. Interacts with host GBF1. Interacts (via GOLD domain) with host ACBD3 (via GOLD domain); this interaction allows the formation of a viral protein 3A/ACBD3 heterotetramer with a 2:2 stoichiometry, which will stimulate the recruitment of host PI4KB in order to synthesize PI4P at the viral RNA replication sites. As to quaternary structure, interacts with RNA-directed RNA polymerase. Interacts with protein 3AB and with RNA-directed RNA polymerase. In terms of assembly, interacts with Viral protein genome-linked and with protein 3CD. Requires Mg(2+) as cofactor. Specific enzymatic cleavages in vivo by the viral proteases yield processing intermediates and the mature proteins. Post-translationally, myristoylation is required for the formation of pentamers during virus assembly. Further assembly of 12 pentamers and a molecule of genomic RNA generates the provirion. In terms of processing, during virion maturation, immature virions are rendered infectious following cleavage of VP0 into VP4 and VP2. This maturation seems to be an autocatalytic event triggered by the presence of RNA in the capsid and it is followed by a conformational change infectious virion. Myristoylation is required during RNA encapsidation and formation of the mature virus particle. Post-translationally, VPg is uridylylated by the polymerase into VPg-pUpU. This acts as a nucleotide-peptide primer for the genomic RNA replication.

The protein localises to the virion. The protein resides in the host cytoplasm. Its subcellular location is the host cytoplasmic vesicle membrane. It localises to the host nucleus. The enzyme catalyses a ribonucleoside 5'-triphosphate + H2O = a ribonucleoside 5'-diphosphate + phosphate + H(+). The catalysed reaction is Selective cleavage of Tyr-|-Gly bond in the picornavirus polyprotein.. It carries out the reaction RNA(n) + a ribonucleoside 5'-triphosphate = RNA(n+1) + diphosphate. It catalyses the reaction Selective cleavage of Gln-|-Gly bond in the poliovirus polyprotein. In other picornavirus reactions Glu may be substituted for Gln, and Ser or Thr for Gly.. Its activity is regulated as follows. Replication or transcription is subject to high level of random mutations by the nucleotide analog ribavirin. Functionally, forms an icosahedral capsid of pseudo T=3 symmetry with capsid proteins VP2 and VP3. The capsid is 300 Angstroms in diameter, composed of 60 copies of each capsid protein and enclosing the viral positive strand RNA genome. Capsid protein VP1 mainly forms the vertices of the capsid. Capsid protein VP1 interacts with host cell receptor to provide virion attachment to target host cells. This attachment induces virion internalization. Tyrosine kinases are probably involved in the entry process. After binding to its receptor, the capsid undergoes conformational changes. Capsid protein VP1 N-terminus (that contains an amphipathic alpha-helix) and capsid protein VP4 are externalized. Together, they shape a pore in the host membrane through which viral genome is translocated to host cell cytoplasm. Forms an icosahedral capsid of pseudo T=3 symmetry with capsid proteins VP2 and VP3. The capsid is 300 Angstroms in diameter, composed of 60 copies of each capsid protein and enclosing the viral positive strand RNA genome. In terms of biological role, lies on the inner surface of the capsid shell. After binding to the host receptor, the capsid undergoes conformational changes. Capsid protein VP4 is released, Capsid protein VP1 N-terminus is externalized, and together, they shape a pore in the host membrane through which the viral genome is translocated into the host cell cytoplasm. Its function is as follows. Component of immature procapsids, which is cleaved into capsid proteins VP4 and VP2 after maturation. Allows the capsid to remain inactive before the maturation step. Functionally, cysteine protease that cleaves viral polyprotein and specific host proteins. It is responsible for the autocatalytic cleavage between the P1 and P2 regions, which is the first cleavage occurring in the polyprotein. Also cleaves the host translation initiation factor EIF4G1, in order to shut down the capped cellular mRNA translation. Inhibits the host nucleus-cytoplasm protein and RNA trafficking by cleaving host members of the nuclear pores. Counteracts stress granule formation probably by antagonizing its assembly or promoting its dissassembly. Plays an essential role in the virus replication cycle by acting as a viroporin. Creates a pore in the host endoplasmic reticulum and as a consequence releases Ca2+ in the cytoplasm of infected cell. In turn, high levels of cytoplasmic calcium may trigger membrane trafficking and transport of viral ER-associated proteins to viroplasms, sites of viral genome replication. In terms of biological role, induces and associates with structural rearrangements of intracellular membranes. Displays RNA-binding, nucleotide binding and NTPase activities. May play a role in virion morphogenesis and viral RNA encapsidation by interacting with the capsid protein VP3. Its function is as follows. Localizes the viral replication complex to the surface of membranous vesicles. It inhibits host cell endoplasmic reticulum-to-Golgi apparatus transport and causes the disassembly of the Golgi complex, possibly through GBF1 interaction. This would result in depletion of MHC, trail receptors and IFN receptors at the host cell surface. Plays an essential role in viral RNA replication by recruiting ACBD3 and PI4KB at the viral replication sites, thereby allowing the formation of the rearranged membranous structures where viral replication takes place. Functionally, acts as a primer for viral RNA replication and remains covalently bound to viral genomic RNA. VPg is uridylylated prior to priming replication into VPg-pUpU. The oriI viral genomic sequence may act as a template for this. The VPg-pUpU is then used as primer on the genomic RNA poly(A) by the RNA-dependent RNA polymerase to replicate the viral genome. During genome replication, the VPg-RNA linkage is removed by the host TDP2, thereby accelerating replication. During the late stage of the replication cycle, host TDP2 is excluded from sites of viral RNA synthesis and encapsidation, allowing for the generation of progeny virions. Involved in the viral replication complex and viral polypeptide maturation. It exhibits protease activity with a specificity and catalytic efficiency that is different from protease 3C. Protein 3CD lacks polymerase activity. Protein 3CD binds to the 5'UTR of the viral genome. In terms of biological role, major viral protease that mediates proteolytic processing of the polyprotein. Cleaves host EIF5B, contributing to host translation shutoff. Also cleaves host PABPC1, contributing to host translation shutoff. Cleaves host NLRP1, triggers host N-glycine-mediated degradation of the autoinhibitory NLRP1 N-terminal fragment. Its function is as follows. Replicates the viral genomic RNA on the surface of intracellular membranes. May form linear arrays of subunits that propagate along a strong head-to-tail interaction called interface-I. Covalently attaches UMP to a tyrosine of VPg, which is used to prime RNA synthesis. The positive stranded RNA genome is first replicated at virus induced membranous vesicles, creating a dsRNA genomic replication form. This dsRNA is then used as template to synthesize positive stranded RNA genomes. ss(+)RNA genomes are either translated, replicated or encapsidated. The polypeptide is Genome polyprotein (Human rhinovirus 16 (HRV-16)).